The chain runs to 1233 residues: MANDSPAKSLVDIDLSSLRDPAGIFELVEVVGNGTYGQVYKGRHVKTVTAAIKVMDVTEDEEEEITLEINMLKKYSHHRNIATYYGAFIKKSPPGHDDQLWLVMEFCGAGSITDLVKNTKGNTLKEDWIAYISREILRGLAHLHIHHVIHRDIKGQNVLLTENAEVKLVDFGVSAQLDRTVGRRNTFIGTPYWMAPEVIACDENPDATYDYRSDLWSCGITAIEMAEGGPPLCDMHPMRALFLIPRNPPPRLKSKKWSKKFFSFIEGCLVKNYMQRPSTEQLLKHPFIRDQPNERQVRIQLKDHIDRTRKKRGEKDETEYEYSGSEEEEEEVPEQEGEPSSIVNVPGESTLRRDFLRLQQENKERSEALRRQQLLQEQQLREQEEYKRQLLAERQKRIEQQKEQRRRLEEQQRREREARRQQEREQRRREQEEKRRLEELERRRKEEEERRRAEEEKRRVEREQEYIRRQLEEEQRHLEILQQQLLQEQAMLLHDHRRPHAQQQPPPPQQQDRSKPSFHAPEPKPHYDPADRAREVQWSHLASLKNNVSPVSRSHSFSDPSPKFAHHHLRSQDPCPPSRSEGLSQSSDSKSEVPEPTQKAWSRSDSDEVPPRVPVRTTSRSPVLSRRDSPLQGGGQQNSQAGQRNSTSSIEPRLLWERVEKLVPRPGSGSSSGSSNSGSQPGSHPGSQSGSGERFRVRSSSKSEGSPSPRQESAAKKPDDKKEVFRSLKPAGEVDLTALAKELRAVEDVRPPHKVTDYSSSSEESGTTDEEEEDVEQEGADDSTSGPEDTRAASSPNLSNGETESVKTMIVHDDVESEPAMTPSKEGTLIVRQTQSASSTLQKHKSSSSFTPFIDPRLLQISPSSGTTVTSVVGFSCDGLRPEAIRQDPTRKGSVVNVNPTNTRPQSDTPEIRKYKKRFNSEILCAALWGVNLLVGTESGLMLLDRSGQGKVYPLISRRRFQQMDVLEGLNVLVTISGKKDKLRVYYLSWLRNKILHNDPEVEKKQGWTTVGDLEGCVHYKVVKYERIKFLVIALKSSVEVYAWAPKPYHKFMAFKSFGELLHKPLLVDLTVEEGQRLKVIYGSCAGFHAVDVDSGSVYDIYLPTHIQCSIKPHAIIILPNTDGMELLVCYEDEGVYVNTYGRITKDVVLQWGEMPTSVAYIRSNQTMGWGEKAIEIRSVETGHLDGVFMHKRAQRLKFLCGRNDKVFFSSVRSGGSSQVYFMTLGRTSLLSW.

A2 carries the N-acetylalanine modification. A Phosphoserine modification is found at S5. A Protein kinase domain is found at 25–289 (FELVEVVGNG…EQLLKHPFIR (265 aa)). ATP contacts are provided by residues 31 to 39 (VGNGTYGQV) and K53. Catalysis depends on D152, which acts as the Proton acceptor. Disordered regions lie at residues 305–348 (IDRT…VPGE), 401–463 (QKEQ…VERE), and 489–805 (QAML…ETES). Acidic residues predominate over residues 316–337 (DETEYEYSGSEEEEEEVPEQEG). Phosphoserine occurs at positions 323 and 325. The span at 521–537 (PEPKPHYDPADRAREVQ) shows a compositional bias: basic and acidic residues. S543 carries the post-translational modification Phosphoserine. Over residues 544-559 (LKNNVSPVSRSHSFSD) the composition is skewed to polar residues. Phosphoserine is present on residues S619, S621, S629, and S646. Basic and acidic residues predominate over residues 654 to 663 (LLWERVEKLV). Residues 666–692 (PGSGSSSGSSNSGSQPGSHPGSQSGSG) are compositionally biased toward low complexity. A phosphoserine mark is found at S691, S703, and S706. Basic and acidic residues-rich tracts occupy residues 713–726 (SAAKKPDDKKEVFR) and 741–756 (KELRAVEDVRPPHKVT). Residues 766-781 (GTTDEEEEDVEQEGAD) are compositionally biased toward acidic residues. Residues 783–803 (STSGPEDTRAASSPNLSNGET) show a composition bias toward polar residues. Residues S785, S794, S795, S799, and S817 each carry the phosphoserine modification. Position 822 is a phosphothreonine (T822). Phosphoserine occurs at positions 846, 849, 894, and 907. The segment at 852–1206 (PFIDPRLLQI…LKFLCGRNDK (355 aa)) is mediates interaction with RAP2A. One can recognise a CNH domain in the interval 920–1207 (NSEILCAALW…KFLCGRNDKV (288 aa)).

The protein belongs to the protein kinase superfamily. STE Ser/Thr protein kinase family. STE20 subfamily. As to quaternary structure, interacts with the SH3 domain of the adapter proteins Nck. Interacts (via its CNH regulatory domain) with ATL1 (via the N-terminal region). Interacts with RAP2A (GTP-bound form preferentially). Mg(2+) is required as a cofactor. As to expression, appears to be ubiquitous, expressed in all tissue types examined. Highest levels observed in heart and brain.

The protein localises to the cytoplasm. It carries out the reaction L-seryl-[protein] + ATP = O-phospho-L-seryl-[protein] + ADP + H(+). It catalyses the reaction L-threonyl-[protein] + ATP = O-phospho-L-threonyl-[protein] + ADP + H(+). Functionally, serine/threonine kinase that plays a role in the response to environmental stress and cytokines such as TNF-alpha. Appears to act upstream of the JUN N-terminal pathway. Activator of the Hippo signaling pathway which plays a pivotal role in organ size control and tumor suppression by restricting proliferation and promoting apoptosis. MAP4Ks act in parallel to and are partially redundant with STK3/MST2 and STK4/MST2 in the phosphorylation and activation of LATS1/2, and establish MAP4Ks as components of the expanded Hippo pathway. Phosphorylates SMAD1 on Thr-322. The chain is Mitogen-activated protein kinase kinase kinase kinase 4 (Map4k4) from Mus musculus (Mouse).